Consider the following 60-residue polypeptide: Small ribosomal subunit protein eS31 (60 aa).

Cys24, Cys27, Cys42, and Cys45 together coordinate Zn(2+). Residues 24-45 (CPRCGPGVFMADHGNRYACGRC) form a C4-type zinc finger.

The protein belongs to the eukaryotic ribosomal protein eS31 family. As to quaternary structure, part of the 30S ribosomal subunit. It depends on Zn(2+) as a cofactor.

The chain is Small ribosomal subunit protein eS31 from Methanopyrus kandleri (strain AV19 / DSM 6324 / JCM 9639 / NBRC 100938).